The primary structure comprises 154 residues: Ubiquitin-conjugating enzyme E2 L3 (154 aa).

One can recognise a UBC core domain in the interval 2–149 (AASRRLMKEL…AEEFTKKYGE (148 aa)). The Glycyl thioester intermediate role is filled by Cys-86. Lys-131 carries the N6-acetyllysine modification.

The protein belongs to the ubiquitin-conjugating enzyme family. Interacts with PRKN; involved in ubiquitination and degradation of misfolded proteins. Interacts with UBE3A. Interacts with CCNB1IP1, CBL, ZAP70, RNF19A, RNF19B and RNF144B. Interacts with ARIH1. Interacts with ARIH2 (via RING-type 1). Interacts with NCOA1; they functionally interact to regulate progesterone receptor transcriptional activity. Interacts with NDFIP1 (via N-terminus); the interaction mediates recruitment of UBE2L3 to ITCH and causes MAP3K7 ubiquitination. Ubiquitinated. The alteration of UBE2L3 protein levels during the S-phase of the cell cycle is due to ubiquitin-dependent proteasomal degradation. Autoubiquitinated in vitro.

The protein resides in the nucleus. The protein localises to the cytoplasm. The enzyme catalyses S-ubiquitinyl-[E1 ubiquitin-activating enzyme]-L-cysteine + [E2 ubiquitin-conjugating enzyme]-L-cysteine = [E1 ubiquitin-activating enzyme]-L-cysteine + S-ubiquitinyl-[E2 ubiquitin-conjugating enzyme]-L-cysteine.. Its pathway is protein modification; protein ubiquitination. Its function is as follows. Ubiquitin-conjugating enzyme E2 that specifically acts with HECT-type and RBR family E3 ubiquitin-protein ligases. Does not function with most RING-containing E3 ubiquitin-protein ligases because it lacks intrinsic E3-independent reactivity with lysine: in contrast, it has activity with the RBR family E3 enzymes, such as PRKN, RNF31 and ARIH1, that function like RING-HECT hybrids. Accepts ubiquitin from the E1 complex and catalyzes its covalent attachment to other proteins. Mediates ubiquitination by the CUL9-RBX1 complex. In vitro catalyzes 'Lys-11'-linked polyubiquitination. Involved in the selective degradation of short-lived and abnormal proteins. Down-regulated during the S-phase it is involved in progression through the cell cycle. Regulates nuclear hormone receptors transcriptional activity. May play a role in myelopoiesis. The chain is Ubiquitin-conjugating enzyme E2 L3 (UBE2L3) from Pongo abelii (Sumatran orangutan).